The sequence spans 263 residues: MAPK-interacting and spindle-stabilizing protein (263 aa).

The segment at 13–238 (GSPAPFLPSG…LGKQQGHNTT (226 aa)) is disordered. Composition is skewed to pro residues over residues 14-34 (SPAP…PYPG) and 140-155 (GLQP…PPGP). Positions 156 to 165 (SAASPGPGSL) are enriched in low complexity. Polar residues predominate over residues 176–189 (PSDSSNPESTLEST). Over residues 202 to 213 (IKRRRSKKKSKR) the composition is skewed to basic residues.

The protein belongs to the MISS family. As to quaternary structure, interacts with MAPK1. Phosphorylated in vitro by MAPK1.

Its subcellular location is the cytoplasm. The protein resides in the cytoskeleton. It localises to the spindle. Involved in the maintenance of the spindle integrity during the cytostatic factor (CSF) arrest of oocytes. In Mus musculus (Mouse), this protein is MAPK-interacting and spindle-stabilizing protein (Mapk1ip1).